A 309-amino-acid polypeptide reads, in one-letter code: Homoserine O-succinyltransferase (309 aa).

The Acyl-thioester intermediate role is filled by Cys-142. Positions 163 and 192 each coordinate substrate. Residue His-235 is the Proton acceptor of the active site. The active site involves Glu-237. Arg-249 lines the substrate pocket.

It belongs to the MetA family. Homodimer.

The protein resides in the cytoplasm. It carries out the reaction L-homoserine + succinyl-CoA = O-succinyl-L-homoserine + CoA. Its pathway is amino-acid biosynthesis; L-methionine biosynthesis via de novo pathway; O-succinyl-L-homoserine from L-homoserine: step 1/1. In terms of biological role, transfers a succinyl group from succinyl-CoA to L-homoserine, forming succinyl-L-homoserine. This is Homoserine O-succinyltransferase from Escherichia coli O139:H28 (strain E24377A / ETEC).